The chain runs to 508 residues: Cytochrome P450 monooxygenase aflV (508 aa).

The chain crosses the membrane as a helical span at residues 18-38 (LTWWFLAVGGAWIVSKIIKIL). 4 N-linked (GlcNAc...) asparagine glycosylation sites follow: asparagine 192, asparagine 209, asparagine 302, and asparagine 408. Residue cysteine 453 participates in heme binding.

It belongs to the cytochrome P450 family. It depends on heme as a cofactor.

It localises to the membrane. It functions in the pathway mycotoxin biosynthesis; aflatoxin biosynthesis. Cytochrome P450 monooxygenase; part of the gene cluster that mediates the biosynthesis of aflatoxins, a group of polyketide-derived furanocoumarins, and part of the most toxic and carcinogenic compounds among the known mycotoxins. The four major aflatoxins produced by A.parasiticus are aflatoxin B1 (AFB1), aflatoxin B2 (AFB2), aflatoxin G1 (AFG1) and aflatoxin G2 (AFG2). The role of the cytochrome P450 monooxygenase aflV in aflatoxin biosynthesis has still to be characterized. The biosynthesis of aflatoxins begins with the norsolorinic acid synthase aflC that combines a hexanoyl starter unit produced by the fatty acid synthase aflA/aflB and 7 malonyl-CoA extender units to synthesize the precursor NOR. The second step is the conversion of NOR to averantin and requires the norsolorinic acid ketoreductase aflD, which catalyzes the dehydration of norsolorinic acid to form (1'S)-averantin. The norsolorinic acid reductases aflE and aflF may also play a role in the conversion of NOR to AVN. The cytochrome P450 monooxygenase aflG then catalyzes the hydroxylation of AVN to 5'hydroxyaverantin (HAVN). The next step is performed by the 5'-hydroxyaverantin dehydrogenase aflH that transforms HAVN to 5'-oxoaverantin (OAVN) which is further converted to averufin (AVF) by aflK that plays a dual role in the pathway, as a 5'-oxoaverantin cyclase that mediates conversion of 5'-oxoaverantin, as well as a versicolorin B synthase in a later step in the pathway. The averufin oxidase aflI catalyzes the conversion of AVF to versiconal hemiacetal acetate (VHA). VHA is then the substrate for the versiconal hemiacetal acetate esterase aflJ to yield versiconal (VAL). Versicolorin B synthase aflK then converts VAL to versicolorin B (VERB) by closing the bisfuran ring of aflatoxin which is required for DNA-binding, thus giving to aflatoxin its activity as a mutagen. Then, the activity of the versicolorin B desaturase aflL leads to versicolorin A (VERA). A branch point starts from VERB since it can also be converted to dihydrodemethylsterigmatocystin (DMDHST), probably also by aflL, VERA being a precursor for aflatoxins B1 and G1, and DMDHST for aflatoxins B2 and G2. Next, the versicolorin reductase aflM and the cytochrome P450 monooxygenase aflN are involved in conversion of VERA to demethylsterigmatocystin (DMST). AflX and aflY seem also involved in this step, through probable aflX-mediated epoxide ring-opening step following versicolorin A oxidation and aflY-mediated Baeyer-Villiger oxidation required for the formation of the xanthone ring. The methyltransferase aflO then leads to the modification of DMST to sterigmatocystin (ST), and of DMDHST to dihydrosterigmatocystin (DHST). Both ST and DHST are then substrates of the O-methyltransferase aflP to yield O-methylsterigmatocystin (OMST) and dihydro-O-methylsterigmatocystin (DHOMST), respectively. Finally OMST is converted to aflatoxins B1 and G1, and DHOMST to aflatoxins B2 and G2, via the action of several enzymes including O-methylsterigmatocystin oxidoreductase aflQ, the cytochrome P450 monooxygenase aflU, but also the NADH-dependent flavin oxidoreductase nadA which is specifically required for the synthesis of AFG1. The protein is Cytochrome P450 monooxygenase aflV of Aspergillus parasiticus (strain ATCC 56775 / NRRL 5862 / SRRC 143 / SU-1).